A 353-amino-acid chain; its full sequence is Elongation factor Ts (353 aa).

The interval T80–V83 is involved in Mg(2+) ion dislocation from EF-Tu.

It belongs to the EF-Ts family.

The protein resides in the cytoplasm. Its function is as follows. Associates with the EF-Tu.GDP complex and induces the exchange of GDP to GTP. It remains bound to the aminoacyl-tRNA.EF-Tu.GTP complex up to the GTP hydrolysis stage on the ribosome. This chain is Elongation factor Ts, found in Sulfurovum sp. (strain NBC37-1).